The chain runs to 239 residues: Fatty acid metabolism regulator protein (239 aa).

An HTH gntR-type domain is found at 6-74; sequence QSPAGFAEEY…HGKPTQVNNF (69 aa). Residues 34–53 constitute a DNA-binding region (H-T-H motif); that stretch reads ERELSELIGVTRTTLREVLQ.

Homodimer.

It localises to the cytoplasm. Its function is as follows. Multifunctional regulator of fatty acid metabolism. This Edwardsiella ictaluri (strain 93-146) protein is Fatty acid metabolism regulator protein.